We begin with the raw amino-acid sequence, 351 residues long: Protein Maqu_2141 (351 aa).

It belongs to the proline racemase family.

In terms of biological role, displays neither proline racemase activity nor trans-4-hydroxy-L-proline (t4LHyp) epimerase activity nor t3LHyp dehydratase activity. The chain is Protein Maqu_2141 from Marinobacter nauticus (strain ATCC 700491 / DSM 11845 / VT8) (Marinobacter aquaeolei).